A 1142-amino-acid polypeptide reads, in one-letter code: Envelopment polyprotein (1142 aa).

Positions 1–21 are cleaved as a signal peptide; sequence MSKFCLCLSLLGVLLLQVCDT. Over 22–489 the chain is Lumenal; that stretch reads RSLLELKIEC…LCVPGIHGWS (468 aa). Cystine bridges form between Cys31-Cys156, Cys65-Cys162, Cys114-Cys133, Cys138-Cys143, Cys180-Cys190, and Cys215-Cys253. Asn139 carries an N-linked (GlcNAc...) asparagine; by host glycan. Asn353 is a glycosylation site (N-linked (GlcNAc...) asparagine; by host). 4 disulfide bridges follow: Cys382–Cys441, Cys386–Cys395, Cys411–Cys430, and Cys458–Cys481. Asn405 is a glycosylation site (N-linked (GlcNAc...) asparagine; by host). A helical transmembrane segment spans residues 490-510; it reads TIALLATFCFGWLLIPIISLV. The Cytoplasmic segment spans residues 511–633; that stretch reads SIKIMLLFAY…LSVFRYRSRC (123 aa). Residues 522–539 form a binding to the ribonucleoprotein region; that stretch reads CSKYSNDSKFRLLIEKVK. 2 consecutive CCHC-type zinc fingers follow at residues 551–571 and 576–597; these read CEVC…KKSC and CPYC…FKVC. 3 binding to the ribonucleoprotein regions span residues 594–611, 598–609, and 617–631; these read FKVC…RKSL, KLTTRFQENLRK, and KRGC…RYRS. Residues 617–640 enclose the ITAM domain; it reads KRGCYRTLSVFRYRSRCFVGLVWC. The short motif at 621 to 624 is the YxxL element; that stretch reads YRTL. A helical transmembrane segment spans residues 634–654; it reads FVGLVWCILLVLELVIWAASA. The Lumenal portion of the chain corresponds to 655-1110; that stretch reads DTVEIKTGWT…EWLMGILSGN (456 aa). 8 disulfide bridges follow: Cys741-Cys776, Cys745-Cys783, Cys757-Cys890, Cys771-Cys901, Cys786-Cys909, Cys812-Cys821, Cys829-Cys838, and Cys869-Cys873. The interval 763 to 783 is fusion loop; sequence YEFETGWGCNPGDCPGVGTGC. Asn933 carries N-linked (GlcNAc...) asparagine; by host glycosylation. 5 cysteine pairs are disulfide-bonded: Cys975–Cys1005, Cys998–Cys1050, Cys1015–Cys1020, Cys1051–Cys1056, and Cys1090–Cys1094. The chain crosses the membrane as a helical span at residues 1111–1131; the sequence is WMVVAVLVVLLILSIFLFSLC. Residues 1127–1142 are binding to the ribonucleoprotein; the sequence is LFSLCCPRRVVHKKSS. The Cytoplasmic portion of the chain corresponds to 1132 to 1142; sequence CPRRVVHKKSS.

This sequence belongs to the hantavirus envelope glycoprotein family. In terms of assembly, homodimer. Homotetramer; forms heterotetrameric Gn-Gc spikes in the pre-fusion conformation. Interacts (via C-terminus) with the nucleoprotein. Interacts with host TUFM; this interaction contributes to the virus-induced degradation of mitochondria by autophagy, which leads to degradation of host MAVS and inhibition of type I interferon (IFN) responses. Interacts with host MAP1LC3B; this interaction contributes to the virus-induced degradation of mitochondria by autophagy, which leads to degradation of host MAVS and inhibition of type I interferon (IFN) responses. As to quaternary structure, homodimer. Homotetramer; forms heterotetrameric Gn-Gc spikes in the pre-fusion conformation. Homotrimer; forms homotrimer in the post-fusion conformation at acidic pH. Interacts (via C-terminus) with the nucleoprotein. Post-translationally, envelope polyprotein precursor is quickly cleaved in vivo just after synthesis, presumably by host signal peptidase.

It is found in the virion membrane. Its subcellular location is the host cell surface. The protein resides in the host Golgi apparatus membrane. The protein localises to the host endoplasmic reticulum membrane. It localises to the host mitochondrion. Functionally, forms homotetramers with glycoprotein C at the surface of the virion. Attaches the virion to host cell receptors including integrin alpha5/ITGB1. This attachment induces virion internalization predominantly through clathrin-dependent endocytosis. Mediates the assembly and budding of infectious virus particles through its interaction with the nucleocapsid protein and the viral genome. May dysregulate normal immune and endothelial cell responses through an ITAM motif. Translocates to mitochondria, binds to host TUFM and recruits MAP1LC3B. These interactions induce mitochondrial autophagy and therefore destruction of host MAVS leading to inhibition of type I interferon (IFN) responses. Concomitant breakdown of glycoprotein N is apparently prevented by the nucleoprotein that may inhibit Gn-stimulated autophagosome-lysosome fusion. Interacts with the viral genomic RNA. Its function is as follows. Forms homotetramers with glycoprotein N at the surface of the virion. Attaches the virion to host cell receptors including integrin ITGAV/ITGB3. This attachment induces virion internalization predominantly through clathrin-dependent endocytosis. Class II fusion protein that promotes fusion of viral membrane with host endosomal membrane after endocytosis of the virion. The polypeptide is Envelopment polyprotein (GP) (Microtus pennsylvanicus (Meadow vole)).